Reading from the N-terminus, the 450-residue chain is Protein tweety homolog 1 (450 aa).

Over 1 to 43 the chain is Extracellular; it reads MGAPPGYRPSAWVHLLHQLPRADFQLRPVPSGFAPQEQEYQQA. Residues 44–64 traverse the membrane as a helical segment; sequence LLLVAALAGLGLGLSLIFIAV. Residues 65–88 lie on the Cytoplasmic side of the membrane; the sequence is YLIRFCCCRPPEPPGSKTPSPGGG. A helical membrane pass occupies residues 89–109; that stretch reads CVTWSCIVALLAGCIGIGIGF. Residues 110 to 214 lie on the Extracellular side of the membrane; sequence YGNSETSDGV…DVSFVEEYRW (105 aa). The N-linked (GlcNAc...) asparagine glycan is linked to Asn130. A helical transmembrane segment spans residues 215–235; that stretch reads LAYVLLLLLELLVCLFTLLGL. Residues 236-240 are Cytoplasmic-facing; it reads AKQSK. A helical membrane pass occupies residues 241-261; the sequence is WLVIVMTVMSLLVLVLSWGSM. The Extracellular segment spans residues 262–390; the sequence is GLEAATAVGL…LRGLCEDALE (129 aa). N-linked (GlcNAc...) asparagine glycosylation is found at Asn284 and Asn355. Cys303 and Cys370 are joined by a disulfide. Residues 391 to 411 form a helical membrane-spanning segment; that stretch reads GLLFLLLFSLLSAGALATALC. The Cytoplasmic portion of the chain corresponds to 412-450; sequence SLPRAWALFPPSDDYDDTDDDDPFNPQESKRFVQWQSSI. Residues 428-450 are disordered; it reads DTDDDDPFNPQESKRFVQWQSSI. Ser440 is modified (phosphoserine).

It belongs to the tweety family. As to quaternary structure, homotetramer; disulfide-linked. Homodimer. In terms of processing, N-glycosylated. Contains high-mannose, hybrid and complex oligosaccharides.

It localises to the cell membrane. The catalysed reaction is chloride(in) = chloride(out). It catalyses the reaction L-glutamate(out) = L-glutamate(in). Functionally, calcium-independent, swelling-dependent volume-regulated anion channel (VRAC-swell) which plays a pivotal role in the process of regulatory volume decrease (RVD) in the brain through the efflux of anions like chloride and organic osmolytes like glutamate. In Macaca fascicularis (Crab-eating macaque), this protein is Protein tweety homolog 1 (TTYH1).